A 261-amino-acid chain; its full sequence is Flap endonuclease Xni (261 aa).

Asp105 is a binding site for Mg(2+). A 5'-3' exonuclease domain is found at 164–256 (SQFLDLMALA…DFRVNSPTKA (93 aa)). Residues Leu172, Ala173, Pro181, Ile183, and Ile186 each contribute to the K(+) site. The interaction with DNA stretch occupies residues 185 to 190 (GIGPKS).

It belongs to the Xni family. Requires Mg(2+) as cofactor. K(+) is required as a cofactor.

In terms of biological role, has flap endonuclease activity. During DNA replication, flap endonucleases cleave the 5'-overhanging flap structure that is generated by displacement synthesis when DNA polymerase encounters the 5'-end of a downstream Okazaki fragment. This Shewanella oneidensis (strain ATCC 700550 / JCM 31522 / CIP 106686 / LMG 19005 / NCIMB 14063 / MR-1) protein is Flap endonuclease Xni.